Here is a 738-residue protein sequence, read N- to C-terminus: Dipeptidyl peptidase 3 (738 aa).

The residue at position 2 (A2) is an N-acetylalanine. H450 lines the Zn(2+) pocket. The active site involves E451. H455 and E508 together coordinate Zn(2+).

Belongs to the peptidase M49 family. Requires Zn(2+) as cofactor.

It is found in the cytoplasm. The catalysed reaction is Release of an N-terminal dipeptide from a peptide comprising four or more residues, with broad specificity. Also acts on dipeptidyl 2-naphthylamides.. Its activity is regulated as follows. Inhibited by spinorphin, an opioid peptide derived from hemoglobin. Functionally, cleaves and degrades bioactive peptides, including angiotensin, Leu-enkephalin and Met-enkephalin. Also cleaves Arg-Arg-beta-naphthylamide. This is Dipeptidyl peptidase 3 (Dpp3) from Rattus norvegicus (Rat).